We begin with the raw amino-acid sequence, 543 residues long: Serine/threonine-protein kinase Chk2 (543 aa).

The segment at 1–66 (MSRESDVEAQ…SGTLSSLETV (66 aa)) is disordered. Polar residues predominate over residues 8–22 (EAQQSHGSSACSQPH). Residues 23 to 62 (GSVTQSQGSSSQSQGISSSSTSTMPNSSQSSHSSSGTLSS) are compositionally biased toward low complexity. Ser62 is modified (phosphoserine; by PLK3). Thr68 is subject to Phosphothreonine; by ATM and MAP3K20. Ser73 is modified (phosphoserine; by PLK3). In terms of domain architecture, FHA spans 113-175 (YWFGRDKSCE…NGTFVNTELV (63 aa)). The Protein kinase domain occupies 220 to 486 (YIMSKTLGSG…TEEALRHPWL (267 aa)). Residues 227–234 (GSGACGEV), Lys249, and 302–308 (ELMEGGE) each bind ATP. Asp347 acts as the Proton acceptor in catalysis. ATP contacts are provided by residues 351–352 (EN) and Asp368. The tract at residues 368-394 (DFGHSKILGETSLMRTLCGTPTYLAPE) is T-loop/activation segment. Residue Ser379 is modified to Phosphoserine; by autocatalysis. Phosphothreonine; by autocatalysis is present on residues Thr383 and Thr387. A Phosphoserine modification is found at Ser456. Positions 506–517 (TALPQVLAQPST) are enriched in polar residues. The tract at residues 506–538 (TALPQVLAQPSTSRKRPREGEAEGAETTKRPAV) is disordered. Over residues 523–534 (REGEAEGAETTK) the composition is skewed to basic and acidic residues.

The protein belongs to the protein kinase superfamily. CAMK Ser/Thr protein kinase family. CHK2 subfamily. Homodimer. Homodimerization is part of the activation process but the dimer may dissociate following activation. Interacts with PML. Interacts with TP53. Interacts with RB1; phosphorylates RB1. Interacts with BRCA1. Interacts (phosphorylated at Thr-68) with MDC1; requires ATM-mediated phosphorylation of CHEK2. Interacts with TP53BP1; modulates CHEK2 phosphorylation at Thr-68 in response to ionizing radiation. Interacts with CDC25A; phosphorylates CDC25A and mediates its degradation in response to ionizing radiation. Interacts with CUL1; mediates CHEK2 ubiquitination and regulation. Interacts with CDKN2AIP. Interacts (via protein kinase domain) with CCAR2 (via N-terminus). Interacts with SIRT1. Mg(2+) is required as a cofactor. Phosphorylated. Phosphorylated at Ser-73 by PLK3 in response to DNA damage, promoting phosphorylation at Thr-68 by ATM and the G2/M transition checkpoint. Phosphorylation at Thr-68 induces homodimerization. Autophosphorylates at Thr-383 and Thr-387 in the T-loop/activation segment upon dimerization to become fully active and phosphorylate its substrates like for instance CDC25C. DNA damage-induced autophosphorylation at Ser-379 induces CUL1-mediated ubiquitination and regulates the pro-apoptotic function. Phosphorylation at Ser-456 also regulates ubiquitination. Phosphorylated by PLK4. Post-translationally, ubiquitinated. CUL1-mediated ubiquitination regulates the pro-apoptotic function. Ubiquitination may also regulate protein stability. Ubiquitinated by RNF8 via 'Lys-48'-linked ubiquitination. High expression is found in testis, spleen, colon and peripheral blood leukocytes. Low expression is found in other tissues.

It is found in the nucleus. It localises to the PML body. The protein localises to the nucleoplasm. The catalysed reaction is L-seryl-[protein] + ATP = O-phospho-L-seryl-[protein] + ADP + H(+). It carries out the reaction L-threonyl-[protein] + ATP = O-phospho-L-threonyl-[protein] + ADP + H(+). Activated through phosphorylation at Thr-68 by ATM in response to DNA double-strand breaks. Activation is modulated by several mediators including MDC1 and TP53BP1. Induces homodimerization with exchange of the T-loop/activation segment between protomers and transphosphorylation of the protomers. The autophosphorylated kinase dimer is fully active. Negatively regulated by PPM1D through dephosphorylation of Thr-68. Its function is as follows. Serine/threonine-protein kinase which is required for checkpoint-mediated cell cycle arrest, activation of DNA repair and apoptosis in response to the presence of DNA double-strand breaks. May also negatively regulate cell cycle progression during unperturbed cell cycles. Following activation, phosphorylates numerous effectors preferentially at the consensus sequence [L-X-R-X-X-S/T]. Regulates cell cycle checkpoint arrest through phosphorylation of CDC25A, CDC25B and CDC25C, inhibiting their activity. Inhibition of CDC25 phosphatase activity leads to increased inhibitory tyrosine phosphorylation of CDK-cyclin complexes and blocks cell cycle progression. May also phosphorylate NEK6 which is involved in G2/M cell cycle arrest. Regulates DNA repair through phosphorylation of BRCA2, enhancing the association of RAD51 with chromatin which promotes DNA repair by homologous recombination. Also stimulates the transcription of genes involved in DNA repair (including BRCA2) through the phosphorylation and activation of the transcription factor FOXM1. Regulates apoptosis through the phosphorylation of p53/TP53, MDM4 and PML. Phosphorylation of p53/TP53 at 'Ser-20' by CHEK2 may alleviate inhibition by MDM2, leading to accumulation of active p53/TP53. Phosphorylation of MDM4 may also reduce degradation of p53/TP53. Also controls the transcription of pro-apoptotic genes through phosphorylation of the transcription factor E2F1. Tumor suppressor, it may also have a DNA damage-independent function in mitotic spindle assembly by phosphorylating BRCA1. Its absence may be a cause of the chromosomal instability observed in some cancer cells. Promotes the CCAR2-SIRT1 association and is required for CCAR2-mediated SIRT1 inhibition. Under oxidative stress, promotes ATG7 ubiquitination by phosphorylating the E3 ubiquitin ligase TRIM32 at 'Ser-55' leading to positive regulation of the autophagosme assembly. Functionally, (Microbial infection) Phosphorylates herpes simplex virus 1/HHV-1 protein ICP0 and thus activates its SUMO-targeted ubiquitin ligase activity. The chain is Serine/threonine-protein kinase Chk2 from Homo sapiens (Human).